The sequence spans 391 residues: Putative gustatory receptor 36b (391 aa).

The Cytoplasmic segment spans residues 1–4 (MVDW). The chain crosses the membrane as a helical span at residues 5–25 (VVLLLKAVHIYCYLIGLSNFE). Over 26–39 (FDCRTGRVFKSRRC) the chain is Extracellular. A helical transmembrane segment spans residues 40–60 (TIYAFMANIFILITIIYNFTA). The Cytoplasmic portion of the chain corresponds to 61 to 74 (HGDTNLLFQSANKL). Residues 75-95 (HEYVIIIMSGLKIVAGLITVL) form a helical membrane-spanning segment. Residues 96–127 (NRWLQRGQMMQLVKDVIRLYMINPQLKSMIRW) lie on the Extracellular side of the membrane. The helical transmembrane segment at 128–148 (GILLKAFISFAIELLQVTLSV) threads the bilayer. The Cytoplasmic segment spans residues 149–165 (DALDRQGTAEMMGLLVK). A helical transmembrane segment spans residues 166–186 (LCVSFIMNLAISQHFLVILLI). Over 187-284 (RAQYRIMNAK…YKYGPHNLKL (98 aa)) the chain is Extracellular. Residues 285 to 305 (SAKTSIIVCILITLFYLDALV) form a helical membrane-spanning segment. Residues 306-363 (NCNNMLRVLDHHKDFLGLLEERTVFASSLDIRLEESFESLQLQLARNPLKINVMGMFP) lie on the Cytoplasmic side of the membrane. A helical transmembrane segment spans residues 364–384 (ITRGSTAAMCASVIVNSIFLI). Residues 385–391 (QFDMEFF) are Extracellular-facing.

It belongs to the insect chemoreceptor superfamily. Gustatory receptor (GR) family. Gr22e subfamily. As to expression, expressed in neurons of the terminal external chemosensory organ of larvae.

Its subcellular location is the cell membrane. In terms of biological role, probable gustatory receptor which mediates acceptance or avoidance behavior, depending on its substrates. The protein is Putative gustatory receptor 36b (Gr36b) of Drosophila melanogaster (Fruit fly).